The following is a 570-amino-acid chain: Phytoene desaturase (570 aa).

Residues Leu-547 to Ile-567 form a helical membrane-spanning segment.

Belongs to the carotenoid/retinoid oxidoreductase family. NAD(+) serves as cofactor.

It is found in the membrane. It catalyses the reaction 15-cis-phytoene + A = all-trans-phytofluene + AH2. The enzyme catalyses all-trans-phytofluene + A = all-trans-zeta-carotene + AH2. It carries out the reaction all-trans-zeta-carotene + A = all-trans-neurosporene + AH2. The catalysed reaction is all-trans-neurosporene + A = all-trans-lycopene + AH2. It functions in the pathway carotenoid biosynthesis. Functionally, phytoene desaturase; part of the car gene cluster that mediates the biosynthesis of neurosporaxanthin, a carboxylic apocarotenoid acting as an essential protective pigments and leading to orange pigmentation. Converts phytoene into lycopene via the intermediates phytofluene, zeta-carotene and neurosporene; and further desaturates gamma-carotene into torulene. Neurosporaxanthin is synthesized from geranyl-geranyl pyrophosphate (GGPP) through several enzymatic activities. Phytoene synthase activity performed by the bifunctional enzyme carAR first produces phytoene from geranyl-geranyl pyrophosphate (GGPP). The phytoene dehydrogenase carB then introduces 4 desaturations to lead to lycopene which is substrate of the carotene cyclase activity of carAR that leads to the production of gamma-carotene. CarB then performs a 5th desaturation reaction to yield torulene. Torulene is the substrate of the dioxidase carT that breaks the molecule, removing five carbon atoms to yield beta-apo-4'-carotenal, whereas the aldehyde dehydrogenase carD mediates the last step by converting beta-apo-4'-carotenal into neurosporaxanthin. In Fusarium fujikuroi (Bakanae and foot rot disease fungus), this protein is Phytoene desaturase.